A 350-amino-acid chain; its full sequence is Uroporphyrinogen decarboxylase (350 aa).

Substrate is bound by residues 23–27 (RQAGR), D72, Y149, S204, and H318.

It belongs to the uroporphyrinogen decarboxylase family. In terms of assembly, homodimer.

The protein resides in the cytoplasm. The enzyme catalyses uroporphyrinogen III + 4 H(+) = coproporphyrinogen III + 4 CO2. It functions in the pathway porphyrin-containing compound metabolism; protoporphyrin-IX biosynthesis; coproporphyrinogen-III from 5-aminolevulinate: step 4/4. Its function is as follows. Catalyzes the decarboxylation of four acetate groups of uroporphyrinogen-III to yield coproporphyrinogen-III. This is Uroporphyrinogen decarboxylase from Carboxydothermus hydrogenoformans (strain ATCC BAA-161 / DSM 6008 / Z-2901).